A 191-amino-acid chain; its full sequence is Threonylcarbamoyl-AMP synthase (191 aa).

In terms of domain architecture, YrdC-like spans 10 to 191 (PFRVRHAAAE…DGRSGAYLRR (182 aa)).

Belongs to the SUA5 family. TsaC subfamily.

The protein resides in the cytoplasm. It catalyses the reaction L-threonine + hydrogencarbonate + ATP = L-threonylcarbamoyladenylate + diphosphate + H2O. Required for the formation of a threonylcarbamoyl group on adenosine at position 37 (t(6)A37) in tRNAs that read codons beginning with adenine. Catalyzes the conversion of L-threonine, HCO(3)(-)/CO(2) and ATP to give threonylcarbamoyl-AMP (TC-AMP) as the acyladenylate intermediate, with the release of diphosphate. The sequence is that of Threonylcarbamoyl-AMP synthase from Halorhodospira halophila (strain DSM 244 / SL1) (Ectothiorhodospira halophila (strain DSM 244 / SL1)).